The primary structure comprises 808 residues: Phospholipase D alpha 1 (808 aa).

Residues 1 to 30 (MAQISLHGTLHVTIYEVDKLHSGGGPHFFR) constitute a propeptide that is removed on maturation. The region spanning 1–125 (MAQISLHGTL…LDGEEIDRWV (125 aa)) is the C2 domain. Residue D186 participates in Ca(2+) binding. Residues 326-364 (TMFTHHQKIVVVDSAMPNGDSQRRRIVSFVGGLDLCDGR) form the PLD phosphodiesterase 1 domain. Catalysis depends on residues H331, K333, and D338. H331 is an a 1,2-diacyl-sn-glycero-3-phosphate binding site. H370 and H404 together coordinate Ca(2+). A 1,2-diacyl-sn-glycero-3-phosphate is bound by residues Q520 and H659. Residues 654-681 (FMIYVHTKMMIVDDEYIIIGSANINQRS) form the PLD phosphodiesterase 2 domain. Residues H659, K661, and D666 contribute to the active site. E720 provides a ligand contact to Ca(2+).

Belongs to the phospholipase D family. C2-PLD subfamily. Ca(2+) is required as a cofactor. As to expression, expression is higher in radicle than in endosperm.

Its subcellular location is the cytoplasm. It is found in the membrane. The protein localises to the vacuole. It localises to the endoplasmic reticulum. The protein resides in the plastid. Its subcellular location is the cell membrane. The enzyme catalyses a 1,2-diacyl-sn-glycero-3-phosphocholine + H2O = a 1,2-diacyl-sn-glycero-3-phosphate + choline + H(+). In terms of biological role, hydrolyzes glycerol-phospholipids at the terminal phosphodiesteric bond. Plays an important role in various cellular processes, including phytohormone action, vesicular trafficking, secretion, cytoskeletal arrangement, meiosis, tumor promotion, pathogenesis, membrane deterioration and senescence. This Ricinus communis (Castor bean) protein is Phospholipase D alpha 1 (PLD1).